A 336-amino-acid polypeptide reads, in one-letter code: 3-isopropylmalate dehydrogenase (336 aa).

4 residues coordinate substrate: R87, R97, R121, and D211. Mg(2+) is bound by residues D211, D235, and D239. 271-283 provides a ligand contact to NAD(+); sequence GSAPDIAGQGIAD.

It belongs to the isocitrate and isopropylmalate dehydrogenases family. LeuB type 2 subfamily. As to quaternary structure, homodimer. Mg(2+) is required as a cofactor. It depends on Mn(2+) as a cofactor.

It localises to the cytoplasm. The catalysed reaction is (2R,3S)-3-isopropylmalate + NAD(+) = 4-methyl-2-oxopentanoate + CO2 + NADH. It participates in amino-acid biosynthesis; L-leucine biosynthesis; L-leucine from 3-methyl-2-oxobutanoate: step 3/4. In terms of biological role, catalyzes the oxidation of 3-carboxy-2-hydroxy-4-methylpentanoate (3-isopropylmalate) to 3-carboxy-4-methyl-2-oxopentanoate. The product decarboxylates to 4-methyl-2 oxopentanoate. The polypeptide is 3-isopropylmalate dehydrogenase (Mycobacterium bovis (strain ATCC BAA-935 / AF2122/97)).